Here is a 114-residue protein sequence, read N- to C-terminus: Small ribosomal subunit protein bS6 (114 aa).

Belongs to the bacterial ribosomal protein bS6 family.

Functionally, binds together with bS18 to 16S ribosomal RNA. In Bacteroides fragilis (strain YCH46), this protein is Small ribosomal subunit protein bS6.